We begin with the raw amino-acid sequence, 395 residues long: HCLS1-binding protein 3 (395 aa).

M1 bears the N-acetylmethionine mark. A Phosphoserine modification is found at S3. The 124-residue stretch at 19–142 (GLDLSVPQHQ…EFLGTRAPGA (124 aa)) folds into the PX domain. Disordered stretches follow at residues 143 to 310 (TGLA…KELF) and 322 to 374 (LGSE…AMDE). The span at 162–174 (DSDEAFDFFEQQD) shows a compositional bias: acidic residues. Position 191 is a phosphoserine (S191). Residues 194-206 (GEEEEEEEEEEVL) show a composition bias toward acidic residues. 2 stretches are compositionally biased toward basic and acidic residues: residues 249 to 260 (SDKKVSETRRPL) and 299 to 310 (RPEHGDASKELF). S254 carries the phosphoserine modification. Residues 329 to 339 (KPQTKPKPLVP) are compositionally biased toward pro residues. The residue at position 341 (K341) is an N6-acetyllysine.

As to quaternary structure, binds HCLS1. Interacts with the SH3 domain of HCLS1 in vitro. In terms of tissue distribution, ubiquitously expressed.

Its function is as follows. May be a modulator of IL-2 signaling. The sequence is that of HCLS1-binding protein 3 (Hs1bp3) from Mus musculus (Mouse).